The sequence spans 199 residues: Superoxide dismutase [Cu-Zn] (199 aa).

A signal peptide spans 1–22; that stretch reads MKLTKVALFSLGLFGFSSMALA. 3 residues coordinate Cu cation: His92, His94, and His117. A disulfide bridge connects residues Cys99 and Cys195. Zn(2+) is bound by residues His117, His126, His135, and Asp138. His173 is a Cu cation binding site.

Belongs to the Cu-Zn superoxide dismutase family. As to quaternary structure, homodimer. It depends on Cu cation as a cofactor. The cofactor is Zn(2+).

The protein localises to the periplasm. It carries out the reaction 2 superoxide + 2 H(+) = H2O2 + O2. Its function is as follows. Destroys radicals which are normally produced within the cells and which are toxic to biological systems. May play a role in the interactive biology of organisms with their hosts and so contribute to their capacity to cause disease. In Haemophilus ducreyi (strain 35000HP / ATCC 700724), this protein is Superoxide dismutase [Cu-Zn] (sodC).